We begin with the raw amino-acid sequence, 205 residues long: Quinone-oxidoreductase QR2 (205 aa).

Residues 5 to 192 (VYIVYYSTYG…LKQAFHQGMY (188 aa)) form the Flavodoxin-like domain. Residues 11 to 15 (STYGH), 112 to 165 (IFFS…SPYG), and His-136 each bind FMN. Tyr-13 is an NAD(+) binding site.

Belongs to the WrbA family. FMN serves as cofactor.

The catalysed reaction is a quinone + NADH + H(+) = a quinol + NAD(+). It carries out the reaction a quinone + NADPH + H(+) = a quinol + NADP(+). Its activity is regulated as follows. Inhibited by dicumarol. Its function is as follows. NAD(P)H:quinone oxidoreductase reducing quinones by a two-electron transfer mechanism. Can use either NADPH or NADH as electron donor. Can use menadione, 5-hydroxy-1,4-naphthoquinone (juglone) and 2,6-dimethoxy-p-benzoquinone (DMBQ) as substrates. Mitigates the toxicity of exogenous quinones in the rhizosphere. This Triphysaria versicolor (Yellow owl's clover) protein is Quinone-oxidoreductase QR2.